The chain runs to 279 residues: MPSRIDATFARARAENRSVLVTYVMSGDPDPETSLEVLKALPGAGADILEFGLPFTDPMADGPAIQAAGLRALKAGQTVSGTLDLVRRFRAGNDTTPVVLMGYYNPIHTYGVDRFLDDAVAAGVDGLIVVDLPPEEDAELCLPALGKGLAFIRLATPTTDERRLPAVLANTAGFVYYVSITGITGTATPDFGKVSEAVARIRRHTDLPVVVGFGVKTGAHAAAIAKGADGVVVGSALVDALVRSLDGEGRPQAGSVGAVTELVRELAAGVRSAGVGRAA.

Residues Glu50 and Asp61 each act as proton acceptor in the active site.

Belongs to the TrpA family. In terms of assembly, tetramer of two alpha and two beta chains.

The enzyme catalyses (1S,2R)-1-C-(indol-3-yl)glycerol 3-phosphate + L-serine = D-glyceraldehyde 3-phosphate + L-tryptophan + H2O. The protein operates within amino-acid biosynthesis; L-tryptophan biosynthesis; L-tryptophan from chorismate: step 5/5. Its function is as follows. The alpha subunit is responsible for the aldol cleavage of indoleglycerol phosphate to indole and glyceraldehyde 3-phosphate. The polypeptide is Tryptophan synthase alpha chain (Methylobacterium radiotolerans (strain ATCC 27329 / DSM 1819 / JCM 2831 / NBRC 15690 / NCIMB 10815 / 0-1)).